A 645-amino-acid polypeptide reads, in one-letter code: Zinc finger and SCAN domain-containing protein 2 (645 aa).

3 disordered regions span residues 1–25 (MMAA…EEDR), 37–75 (DDSW…GPQG), and 193–230 (EMPE…HGEV). Residues 59–132 (SAGKGSPQEE…ALVEDLTQTL (74 aa)) enclose the SCAN box domain. Over residues 199-214 (SAQHSDGESDFERDAG) the composition is skewed to basic and acidic residues. 14 consecutive C2H2-type zinc fingers follow at residues 253–275 (YECP…ERTH), 281–303 (YKCD…QTTH), 309–331 (YKCR…QRIH), 337–359 (FQCA…QRTH), 365–387 (YSCP…QGIH), 393–415 (YECK…QRIH), 421–443 (YKCT…RRTH), 449–471 (YQCS…RRTH), 477–499 (YKCG…QGMH), 505–527 (YECL…QRIH), 533–555 (YKCS…QQTH), 561–583 (YKCL…QRAH), 589–611 (YRCP…QRIH), and 617–639 (YKCP…QRTH).

The protein belongs to the krueppel C2H2-type zinc-finger protein family.

The protein localises to the nucleus. In terms of biological role, may be involved in transcriptional regulation during the post-meiotic stages of spermatogenesis. The protein is Zinc finger and SCAN domain-containing protein 2 (ZSCAN2) of Pongo abelii (Sumatran orangutan).